The following is a 303-amino-acid chain: N-acetyl-D-glucosamine kinase (303 aa).

Residues 4–11 (GFDIGGTK) and 133–140 (GVGGGLVF) each bind ATP. Histidine 157, cysteine 177, cysteine 179, and cysteine 184 together coordinate Zn(2+).

It belongs to the ROK (NagC/XylR) family. NagK subfamily.

The enzyme catalyses N-acetyl-D-glucosamine + ATP = N-acetyl-D-glucosamine 6-phosphate + ADP + H(+). It functions in the pathway cell wall biogenesis; peptidoglycan recycling. Catalyzes the phosphorylation of N-acetyl-D-glucosamine (GlcNAc) derived from cell-wall degradation, yielding GlcNAc-6-P. This chain is N-acetyl-D-glucosamine kinase, found in Shigella flexneri serotype 5b (strain 8401).